A 490-amino-acid polypeptide reads, in one-letter code: Cytochrome P450 2C7 (490 aa).

Arg-144 is modified (dimethylated arginine). Residue Cys-435 coordinates heme.

It belongs to the cytochrome P450 family. Heme serves as cofactor.

It localises to the endoplasmic reticulum membrane. Its subcellular location is the microsome membrane. The catalysed reaction is an organic molecule + reduced [NADPH--hemoprotein reductase] + O2 = an alcohol + oxidized [NADPH--hemoprotein reductase] + H2O + H(+). In terms of biological role, cytochromes P450 are a group of heme-thiolate monooxygenases. In liver microsomes, this enzyme is involved in an NADPH-dependent electron transport pathway. It oxidizes a variety of structurally unrelated compounds, including steroids, fatty acids, and xenobiotics. This Rattus norvegicus (Rat) protein is Cytochrome P450 2C7 (Cyp2c7).